A 428-amino-acid polypeptide reads, in one-letter code: Histidine--tRNA ligase (428 aa).

It belongs to the class-II aminoacyl-tRNA synthetase family. Homodimer.

It is found in the cytoplasm. It carries out the reaction tRNA(His) + L-histidine + ATP = L-histidyl-tRNA(His) + AMP + diphosphate + H(+). The chain is Histidine--tRNA ligase from Lactobacillus gasseri (strain ATCC 33323 / DSM 20243 / BCRC 14619 / CIP 102991 / JCM 1131 / KCTC 3163 / NCIMB 11718 / NCTC 13722 / AM63).